The following is a 209-amino-acid chain: ATP-dependent Clp protease proteolytic subunit (209 aa).

The active-site Nucleophile is S106. H131 is an active-site residue.

This sequence belongs to the peptidase S14 family. Fourteen ClpP subunits assemble into 2 heptameric rings which stack back to back to give a disk-like structure with a central cavity, resembling the structure of eukaryotic proteasomes.

The protein localises to the cytoplasm. It catalyses the reaction Hydrolysis of proteins to small peptides in the presence of ATP and magnesium. alpha-casein is the usual test substrate. In the absence of ATP, only oligopeptides shorter than five residues are hydrolyzed (such as succinyl-Leu-Tyr-|-NHMec, and Leu-Tyr-Leu-|-Tyr-Trp, in which cleavage of the -Tyr-|-Leu- and -Tyr-|-Trp bonds also occurs).. Cleaves peptides in various proteins in a process that requires ATP hydrolysis. Has a chymotrypsin-like activity. Plays a major role in the degradation of misfolded proteins. This Brucella canis (strain ATCC 23365 / NCTC 10854 / RM-666) protein is ATP-dependent Clp protease proteolytic subunit.